A 252-amino-acid chain; its full sequence is Short chain dehydrogenase andC (252 aa).

Residues 1 to 25 (MGFLQDKVVIITGAAAGIGLATATA) form the signal peptide. NADP(+) is bound by residues Ile-11, Asp-57, and Arg-119. Ser-137 (proton donor) is an active-site residue. Tyr-151 and Lys-155 together coordinate NADP(+). Catalysis depends on Tyr-151, which acts as the Proton acceptor. Lys-155 functions as the Lowers pKa of active site Tyr in the catalytic mechanism.

Belongs to the short-chain dehydrogenases/reductases (SDR) family.

The protein operates within secondary metabolite biosynthesis; terpenoid biosynthesis. In terms of biological role, short chain dehydrogenase; part of the gene cluster that mediates the biosynthesis of anditomin, a fungal meroterpenoid. The first step of the pathway is the synthesis of 3,5-dimethylorsellinic acid (DMOA) by the polyketide synthase andM. DMOA is then converted to the phthalide compound 5,7-dihydroxy-4,6-dimethylphthalide (DHDMP) by the cytochrome P450 monooxygenase andK, which is further prenylated by the prenyltransferase andD to yield farnesyl-DHDMP. Further epoxidation by the FAD-dependent monooxygenase andE leads to epoxyfarnesyl-DHDMP. The next step involves the terpene cyclase andB that converts epoxyfarnesyl-DHDMP into preandiloid A through opening of the epoxide ring followed by the cyclization of the farnesyl moiety. Preandiloid A is in turn oxidized at the C-3 hydroxyl group to yield preandiloid B by the dehydrogenase andC. The dioxygenase andA is solely responsible for the dehydrogenation of preandiloid B leading to the enone preandiloid C, as well as for the intriguing structural rearrangement to generate the bicyclo[2.2.2]octane core, transforming preandiloid C into andiconin. FAD-binding monooxygenase andJ then produces andilesin D which is reduced by dehydrogenase andI to yield andilesin A. Action of acetyltransferase andG followed by a spontaneous acetate elimination leads then to andilesin B, which is in turn substrate of the short chain dehydrogenase andH to yield andilesin C. Finally, the dioxygenase andF catalyzes the transformation of andilesin C to anditomin. The chain is Short chain dehydrogenase andC from Emericella variicolor (Aspergillus stellatus).